The following is a 551-amino-acid chain: HTH-type transcriptional regulator SgrR (551 aa).

An HTH marR-type domain is found at 1–116 (MPSARLQQQF…LVSHLGRSFR (116 aa)). A DNA-binding region (H-T-H motif) is located at residues 26–49 (LNELAALLSCSRRHMRTLLNTMQD). The solute-binding stretch occupies residues 163–492 (ELEADIAHHW…IDWQADAARW (330 aa)).

Its function is as follows. Activates the small RNA gene sgrS under glucose-phosphate stress conditions as well as yfdZ. Represses its own transcription under both stress and non-stress conditions. Might act as a sensor of the intracellular accumulation of phosphoglucose by binding these molecules in its C-terminal solute-binding domain. This chain is HTH-type transcriptional regulator SgrR, found in Shigella flexneri serotype 5b (strain 8401).